The following is a 309-amino-acid chain: Ribosomal RNA small subunit methyltransferase H (309 aa).

S-adenosyl-L-methionine-binding positions include 36-38, D56, F82, D103, and Q110; that span reads GGH.

The protein belongs to the methyltransferase superfamily. RsmH family.

It localises to the cytoplasm. It carries out the reaction cytidine(1402) in 16S rRNA + S-adenosyl-L-methionine = N(4)-methylcytidine(1402) in 16S rRNA + S-adenosyl-L-homocysteine + H(+). Functionally, specifically methylates the N4 position of cytidine in position 1402 (C1402) of 16S rRNA. The sequence is that of Ribosomal RNA small subunit methyltransferase H from Hahella chejuensis (strain KCTC 2396).